The following is a 537-amino-acid chain: Tyrosine-protein kinase Fyn (537 aa).

A lipid anchor (N-myristoyl glycine) is attached at Gly2. Residues Cys3 and Cys6 are each lipidated (S-palmitoyl cysteine). A Phosphothreonine; by PKC modification is found at Thr12. The SH3 domain maps to 82 to 143 (TGVTLFVALY…PSNYVAPVDS (62 aa)). In terms of domain architecture, SH2 spans 149-246 (WYFGKLGRKD…GLCCRLVVPC (98 aa)). The Protein kinase domain maps to 271–524 (LQLIKRLGNG…YLQAFLEDYF (254 aa)). Residues 277–285 (LGNGQFGEV) and Lys299 each bind ATP. Asp390 functions as the Proton acceptor in the catalytic mechanism. Tyr420 bears the Phosphotyrosine; by autocatalysis mark. Phosphotyrosine is present on Tyr531.

The protein belongs to the protein kinase superfamily. Tyr protein kinase family. SRC subfamily. In terms of assembly, associates through its SH3 domain, to the p85 subunit of phosphatidylinositol 3-kinase. The cofactor is Mn(2+).

It carries out the reaction L-tyrosyl-[protein] + ATP = O-phospho-L-tyrosyl-[protein] + ADP + H(+). Inhibited by phosphorylation of Tyr-531 by leukocyte common antigen and activated by dephosphorylation of this site. In terms of biological role, tyrosine-protein kinase implicated in the control of cell growth. Plays a role in the regulation of intracellular calcium levels. Required in brain development and mature brain function with important roles in the regulation of axon growth, axon guidance, and neurite extension. This chain is Tyrosine-protein kinase Fyn (fyn), found in Xiphophorus hellerii (Green swordtail).